Consider the following 146-residue polypeptide: Interleukin-13 (146 aa).

Residues 1–24 (MHPLLNPLLLALGLMALLLTTVIA) form the signal peptide. Residues asparagine 52, asparagine 63, asparagine 71, and asparagine 86 are each glycosylated (N-linked (GlcNAc...) asparagine). 2 disulfides stabilise this stretch: cysteine 62/cysteine 90 and cysteine 78/cysteine 104.

Belongs to the IL-4/IL-13 family. In terms of assembly, interacts with IL13RA2.

Its subcellular location is the secreted. Its function is as follows. Cytokine that plays important roles in allergic inflammation and immune response to parasite infection. Synergizes with IL2 in regulating interferon-gamma synthesis. Stimulates B-cell proliferation, and activation of eosinophils, basophils, and mast cells. Plays an important role in controlling IL33 activity by modulating the production of transmembrane and soluble forms of interleukin-1 receptor-like 1/IL1RL1. Displays the capacity to antagonize Th1-driven proinflammatory immune response and downregulates synthesis of many proinflammatory cytokines including IL1, IL6, IL10, IL12 and TNF-alpha through a mechanism that partially involves suppression of NF-kappa-B. Also functions on nonhematopoietic cells, including endothelial cells where it induces vascular cell adhesion protein 1/VCAM1, which is important in the recruitment of eosinophils. Exerts its biological effects through its receptors which comprises the IL4R chain and the IL13RA1 chain, to activate JAK1 and TYK2, leading to the activation of STAT6. Aside from IL13RA1, another receptor IL13RA2 acts as a high affinity decoy for IL13 and mediates internalization and depletion of extracellular IL13. In Homo sapiens (Human), this protein is Interleukin-13 (IL13).